We begin with the raw amino-acid sequence, 211 residues long: Protein-L-isoaspartate O-methyltransferase (211 aa).

S62 is an active-site residue.

The protein belongs to the methyltransferase superfamily. L-isoaspartyl/D-aspartyl protein methyltransferase family.

It is found in the cytoplasm. It catalyses the reaction [protein]-L-isoaspartate + S-adenosyl-L-methionine = [protein]-L-isoaspartate alpha-methyl ester + S-adenosyl-L-homocysteine. Its function is as follows. Catalyzes the methyl esterification of L-isoaspartyl residues in peptides and proteins that result from spontaneous decomposition of normal L-aspartyl and L-asparaginyl residues. It plays a role in the repair and/or degradation of damaged proteins. The chain is Protein-L-isoaspartate O-methyltransferase from Shewanella sp. (strain MR-4).